The chain runs to 297 residues: Large ribosomal subunit protein uL18 (297 aa).

Gly-2 bears the N-acetylglycine mark. Residues Lys-5 and Lys-48 each carry the N6-acetyllysine modification. Position 185 is a phosphoserine (Ser-185). Lys-220 bears the N6-acetyllysine; alternate mark. A Glycyl lysine isopeptide (Lys-Gly) (interchain with G-Cter in SUMO1); alternate cross-link involves residue Lys-220. Lys-220 participates in a covalent cross-link: Glycyl lysine isopeptide (Lys-Gly) (interchain with G-Cter in SUMO2); alternate. At Thr-232 the chain carries Phosphothreonine. The tract at residues 253 to 297 (YEKKPKKEVKKKRWNRPKMSLAQKKDRVAQKKASFLRAQERAAES) is disordered. Over residues 258-268 (KKEVKKKRWNR) the composition is skewed to basic residues. Residue Ser-272 is modified to Phosphoserine.

Belongs to the universal ribosomal protein uL18 family. As to quaternary structure, component of the large ribosomal subunit (LSU). Part of the 5S RNP complex, which is a LSU subcomplex composed of the 5S RNA, RPL5 and RPL11. Component of a hexameric 5S RNP precursor complex, composed of 5S RNA, RRS1, RPF2/BXDC1, RPL5, RPL11 and HEATR3; this complex acts as a precursor for ribosome assembly. Interacts with NVL in an ATP-dependent manner. Interacts with RRP1B. Interacts with IPO5, IPO7 and KPNB1; these interactions may be involved in RPL5 nuclear import for the assembly of ribosomal subunits. Interacts with RRP1B.

The protein resides in the cytoplasm. The protein localises to the nucleus. It is found in the nucleolus. In terms of biological role, component of the ribosome, a large ribonucleoprotein complex responsible for the synthesis of proteins in the cell. The small ribosomal subunit (SSU) binds messenger RNAs (mRNAs) and translates the encoded message by selecting cognate aminoacyl-transfer RNA (tRNA) molecules. The large subunit (LSU) contains the ribosomal catalytic site termed the peptidyl transferase center (PTC), which catalyzes the formation of peptide bonds, thereby polymerizing the amino acids delivered by tRNAs into a polypeptide chain. The nascent polypeptides leave the ribosome through a tunnel in the LSU and interact with protein factors that function in enzymatic processing, targeting, and the membrane insertion of nascent chains at the exit of the ribosomal tunnel. As part of the 5S RNP/5S ribonucleoprotein particle it is an essential component of the LSU, required for its formation and the maturation of rRNAs. It also couples ribosome biogenesis to p53/TP53 activation. As part of the 5S RNP it accumulates in the nucleoplasm and inhibits MDM2, when ribosome biogenesis is perturbed, mediating the stabilization and the activation of TP53. The protein is Large ribosomal subunit protein uL18 (RPL5) of Macaca fascicularis (Crab-eating macaque).